The following is a 1340-amino-acid chain: Protein SHORT ROOT IN SALT MEDIUM 1 (1340 aa).

Disordered regions lie at residues 1 to 73, 161 to 185, 357 to 473, 723 to 750, 784 to 990, and 1063 to 1269; these read MHRD…RSHL, YGEQ…ADPS, EEER…IRRS, TVEV…KKTV, PETT…PPRA, and RNQR…KREE. Residues 7–39 are compositionally biased toward low complexity; the sequence is SSRGTGYGQQQYGSQSGYSQNLGSGYPGSSVSG. The segment covering 46 to 60 has biased composition (polar residues); it reads QISLSSRHPSITGAP. Basic and acidic residues-rich tracts occupy residues 173–182, 357–470, and 723–735; these read LQNEPTRRYA, EEER…EASI, and TVEV…KKSP. Positions 355-426 form a coiled coil; the sequence is LREEERRRED…RERKRALEIK (72 aa). The span at 810–824 shows a compositional bias: polar residues; the sequence is GDTSDPSAKANEQTP. Residues 828–840 show a composition bias toward basic residues; it reads IVKKKIIKRVAKR. 4 stretches are compositionally biased toward basic and acidic residues: residues 841-872, 887-988, 1069-1097, and 1105-1138; these read KVAE…KKSS, EDVK…EEPP, HQEE…DKEA, and PGKD…ETLG. Residues 1052–1086 are a coiled coil; that stretch reads LKKLRVKIVRQRNQRKRHQEELSVKQNEAKSQDKR. Residues 1153–1204 are compositionally biased toward acidic residues; sequence ENQDEEDDDGDDDPEEDPEEDPEEDPEEDPEEDPEECEEMDVANTEQEEPAE. Basic and acidic residues-rich tracts occupy residues 1205-1214 and 1229-1257; these read EPQKKEENLE and TDNR…HGKQ. The 36-residue stretch at 1270 to 1305 folds into the EF-hand domain; the sequence is TVDKELLQAFRFFDRNQAGYVRVEDMRVTIHSLGKF.

In terms of assembly, interacts with BHLH148/RITF1. In terms of tissue distribution, expressed ubiquitously at high levels, including in guard cells.

It localises to the nucleus. Functionally, required for salt tolerance and sodium (Na) homeostasis after salt stress. Together with BHLH148/RITF1, regulates the transcription of several genes involved in the detoxification of reactive oxygen species (ROS) generated by salt (NaCl) stress. Binds calcium. In Arabidopsis thaliana (Mouse-ear cress), this protein is Protein SHORT ROOT IN SALT MEDIUM 1.